Consider the following 133-residue polypeptide: uncharacterized protein (133 aa).

4 helical membrane-spanning segments follow: residues 5–27 (KLFF…FSLI), 42–64 (IAWN…YSLY), 77–99 (ALIS…TFSS), and 103–125 (LVWW…LLLK).

The protein localises to the cell membrane. This is an uncharacterized protein from Bacillus subtilis (strain 168).